Consider the following 1093-residue polypeptide: TATA element modulatory factor (1093 aa).

2 disordered regions span residues 38-80 (WAET…SPKA) and 108-189 (TIQK…DMKV). Positions 51-70 (SPVSGGWDTSTWGLKSNTEP) are enriched in polar residues. A phosphoserine mark is found at S72, S77, S112, and S136. Over residues 123–137 (QRPEEEVKSSLHESL) the composition is skewed to basic and acidic residues. Residues 139–158 (IGQSRTPETTESQVKDSSLC) are compositionally biased toward polar residues. Positions 173–187 (TEGKHEETVNKESDM) are enriched in basic and acidic residues. Residues S199 and S217 each carry the phosphoserine modification. The segment covering 229-238 (PKEQKHEDRQ) has biased composition (basic and acidic residues). 2 disordered regions span residues 229-260 (PKEQ…SDIE) and 266-285 (SVIS…SKSS). Positions 246-257 (VSTFSSGTSTTS) are enriched in low complexity. Phosphoserine occurs at positions 328, 330, 333, 338, 344, 413, 542, 925, and 928. Residues 333–342 (SLDSRSVSEI) form an interaction with Elongin BC complex region. Positions 439–922 (EALSEKEDVC…QETIKEKERK (484 aa)) form a coiled coil. The disordered stretch occupies residues 919–939 (KERKPFSVSSTPTMSRSSSIS). Residues 925–939 (SVSSTPTMSRSSSIS) are compositionally biased toward low complexity. A Phosphothreonine modification is found at T929. A Phosphoserine modification is found at S933. Positions 984–1092 (SIIENLQSQL…QIDELLRQSL (109 aa)) form a coiled coil.

In terms of assembly, interacts with TRNP1; may regulate TRNP1 proteasomal degradation. Component of the SNF/SWI transcription factor complexes. Interacts with RAB6A. Interacts with STAT3 and FER. Interacts with TCEB1. In terms of processing, phosphorylated by FER.

It localises to the cytoplasm. It is found in the nucleus. Its subcellular location is the golgi apparatus membrane. Potential coactivator of the androgen receptor. Mediates STAT3 degradation. May play critical roles in two RAB6-dependent retrograde transport processes: one from endosomes to the Golgi and the other from the Golgi to the ER. This protein binds the HIV-1 TATA element and inhibits transcriptional activation by the TATA-binding protein (TBP). In Homo sapiens (Human), this protein is TATA element modulatory factor (TMF1).